The following is a 365-amino-acid chain: Eukaryotic translation initiation factor 3 subunit H (365 aa).

The region spanning 11–160 is the MPN domain; sequence VKVDALVVMK…LRAFRLSSKF (150 aa).

Belongs to the eIF-3 subunit H family. In terms of assembly, component of the eukaryotic translation initiation factor 3 (eIF-3) complex.

It is found in the cytoplasm. Component of the eukaryotic translation initiation factor 3 (eIF-3) complex, which is involved in protein synthesis of a specialized repertoire of mRNAs and, together with other initiation factors, stimulates binding of mRNA and methionyl-tRNAi to the 40S ribosome. The eIF-3 complex specifically targets and initiates translation of a subset of mRNAs involved in cell proliferation. In Aspergillus oryzae (strain ATCC 42149 / RIB 40) (Yellow koji mold), this protein is Eukaryotic translation initiation factor 3 subunit H.